The sequence spans 301 residues: Immune-associated nucleotide-binding protein 5 (301 aa).

The 204-residue stretch at 11 to 214 (EPVRNIVLVG…FTEENDLNEK (204 aa)) folds into the AIG1-type G domain. The interval 20–27 (GPTGNGKS) is G1. 20-28 (GPTGNGKSS) is a GTP binding site. The segment at 46-50 (CKTCK) is G2. Residues 63-66 (DTPG) are G3. Positions 133-136 (TGGD) are G4. Positions 172–174 (NNK) are G5. Asparagine 173 serves as a coordination point for GTP.

Belongs to the TRAFAC class TrmE-Era-EngA-EngB-Septin-like GTPase superfamily. AIG1/Toc34/Toc159-like paraseptin GTPase family. IAN subfamily. As to expression, expressed in pollen, cotyledons and lateral roots.

This is Immune-associated nucleotide-binding protein 5 from Arabidopsis thaliana (Mouse-ear cress).